Consider the following 299-residue polypeptide: tRNA dimethylallyltransferase (299 aa).

13 to 20 lines the ATP pocket; sequence GPTASGKT. 15-20 serves as a coordination point for substrate; that stretch reads TASGKT. Residues 38–41 are interaction with substrate tRNA; sequence DSRQ.

The protein belongs to the IPP transferase family. As to quaternary structure, monomer. Requires Mg(2+) as cofactor.

The enzyme catalyses adenosine(37) in tRNA + dimethylallyl diphosphate = N(6)-dimethylallyladenosine(37) in tRNA + diphosphate. In terms of biological role, catalyzes the transfer of a dimethylallyl group onto the adenine at position 37 in tRNAs that read codons beginning with uridine, leading to the formation of N6-(dimethylallyl)adenosine (i(6)A). The polypeptide is tRNA dimethylallyltransferase (Prochlorococcus marinus (strain SARG / CCMP1375 / SS120)).